The primary structure comprises 351 residues: Uroporphyrinogen decarboxylase (351 aa).

Substrate contacts are provided by residues 25–29 (RQAGR), aspartate 74, tyrosine 151, serine 206, and histidine 325.

Belongs to the uroporphyrinogen decarboxylase family. Homodimer.

It is found in the cytoplasm. The enzyme catalyses uroporphyrinogen III + 4 H(+) = coproporphyrinogen III + 4 CO2. Its pathway is porphyrin-containing compound metabolism; protoporphyrin-IX biosynthesis; coproporphyrinogen-III from 5-aminolevulinate: step 4/4. Its function is as follows. Catalyzes the decarboxylation of four acetate groups of uroporphyrinogen-III to yield coproporphyrinogen-III. The chain is Uroporphyrinogen decarboxylase from Chlorobium phaeobacteroides (strain BS1).